A 454-amino-acid chain; its full sequence is Chromosomal replication initiator protein DnaA (454 aa).

Residues 1 to 83 (MTEKEHFFWN…IKVEYVFDEA (83 aa)) form a domain I, interacts with DnaA modulators region. Positions 83 to 113 (ALVSETKPTLANNDFSNKREQQTPDLPTLNS) are domain II. Residues 114 to 332 (DLNSKYTFDN…GALKDISLVA (219 aa)) are domain III, AAA+ region. Residues Gly-158, Gly-160, Lys-161, and Thr-162 each contribute to the ATP site. The domain IV, binds dsDNA stretch occupies residues 333–454 (NVRQLDTITV…EIDTIKNKIK (122 aa)).

Belongs to the DnaA family. As to quaternary structure, oligomerizes as a right-handed, spiral filament on DNA at oriC.

Its subcellular location is the cytoplasm. In terms of biological role, plays an essential role in the initiation and regulation of chromosomal replication. ATP-DnaA binds to the origin of replication (oriC) to initiate formation of the DNA replication initiation complex once per cell cycle. Binds the DnaA box (a 9 base pair repeat at the origin) and separates the double-stranded (ds)DNA. Forms a right-handed helical filament on oriC DNA; dsDNA binds to the exterior of the filament while single-stranded (ss)DNA is stabiized in the filament's interior. The ATP-DnaA-oriC complex binds and stabilizes one strand of the AT-rich DNA unwinding element (DUE), permitting loading of DNA polymerase. After initiation quickly degrades to an ADP-DnaA complex that is not apt for DNA replication. Binds acidic phospholipids. The sequence is that of Chromosomal replication initiator protein DnaA from Streptococcus thermophilus (strain ATCC BAA-250 / LMG 18311).